The following is a 267-amino-acid chain: Indole-3-glycerol phosphate synthase (267 aa).

It belongs to the TrpC family.

It carries out the reaction 1-(2-carboxyphenylamino)-1-deoxy-D-ribulose 5-phosphate + H(+) = (1S,2R)-1-C-(indol-3-yl)glycerol 3-phosphate + CO2 + H2O. It functions in the pathway amino-acid biosynthesis; L-tryptophan biosynthesis; L-tryptophan from chorismate: step 4/5. This chain is Indole-3-glycerol phosphate synthase, found in Dichelobacter nodosus (strain VCS1703A).